We begin with the raw amino-acid sequence, 633 residues long: DEAD-box ATP-dependent RNA helicase 27 (633 aa).

Basic and acidic residues predominate over residues 1–17 (MANLDMEQHSSENEEIK). A disordered region spans residues 1 to 147 (MANLDMEQHS…DKEEEKKLEE (147 aa)). Residues 2–34 (ANLDMEQHSSENEEIKKKKHKKRARDEAKKLKQ) adopt a coiled-coil conformation. Acidic residues-rich tracts occupy residues 37-47 (MEEEPDHEDGD) and 74-83 (DDGEDEAVAE). Positions 88 to 97 (KKKKKNKKLQ) are enriched in basic residues. 2 stretches are compositionally biased toward acidic residues: residues 103–114 (NDEEDEVIAEEE) and 131–140 (SEEEEVEDKE). The stretch at 117 to 153 (KKKKKKQRKDTEAKSEEEEVEDKEEEKKLEETSIMTN) forms a coiled coil. The short motif at 154-182 (KTFESLSLSDNTYKSIKEMGFARMTQIQA) is the Q motif element. The 176-residue stretch at 185 to 360 (IPPLMMGEDV…RVSLTSPVYI (176 aa)) folds into the Helicase ATP-binding domain. 198 to 205 (ARTGSGKT) serves as a coordination point for ATP. The DEAD box signature appears at 308–311 (DEAD). Residues 386-534 (RLLFLLTFLK…EHEFEEKKLL (149 aa)) enclose the Helicase C-terminal domain. The tract at residues 608 to 633 (KREPVNKFKRGRGGGRPGGKSKFERY) is disordered.

It belongs to the DEAD box helicase family. DDX18/HAS1 subfamily.

It carries out the reaction ATP + H2O = ADP + phosphate + H(+). In Arabidopsis thaliana (Mouse-ear cress), this protein is DEAD-box ATP-dependent RNA helicase 27 (RH27).